Here is a 530-residue protein sequence, read N- to C-terminus: Copine-D (530 aa).

2 consecutive C2 domains span residues 1–122 (MNPI…RMKM) and 130–248 (LSGS…EFEI). 5 residues coordinate Ca(2+): Asp25, Asp31, Asp85, Asp87, and Asp100. The 219-residue stretch at 289 to 507 (NLMVAIDCTA…ALAHETLKEI (219 aa)) folds into the VWFA domain.

It belongs to the copine family. Ca(2+) serves as cofactor.

The protein is Copine-D (cpnD) of Dictyostelium discoideum (Social amoeba).